A 136-amino-acid polypeptide reads, in one-letter code: Lymphocyte antigen 6E (136 aa).

A signal peptide spans 1–26; that stretch reads MSATSNMRVFLPVLLAALLGMEQVHS. The UPAR/Ly6 domain maps to 27–118; sequence LMCFSCTDQK…AGLGLRASIP (92 aa). 5 disulfides stabilise this stretch: cysteine 29–cysteine 54, cysteine 32–cysteine 41, cysteine 47–cysteine 76, cysteine 80–cysteine 98, and cysteine 99–cysteine 104. Asparagine 105 carries an N-linked (GlcNAc...) asparagine glycan. Alanine 108 carries GPI-anchor amidated alanine lipidation. A propeptide spans 109–136 (removed in mature form); it reads AGLGLRASIPLLGLGLLLSLLALLQLSP.

In terms of assembly, interacts with CHRNA4. Interacts with CD3Z/CD247. In terms of tissue distribution, ubiquitously expressed in mouse adult tissues with maximal expression in the lung and the salivary gland. Expression is strikingly lower in the fetal tissues except for the placenta. Present in thymus where its expression is observed in immature thymocytes and thymic stromal cells. Also found on functionally active T-cells as well as B-cells and thymic dendritic cells.

It localises to the cell membrane. Functionally, GPI-anchored cell surface protein that regulates T-lymphocytes proliferation, differentiation, and activation. Regulates the T-cell receptor (TCR) signaling by interacting with component CD3Z/CD247 at the plasma membrane, leading to CD3Z/CD247 phosphorylation modulation. Restricts the entry of murine coronavirus, mouse hepatitis virus, by interfering with spike protein-mediated membrane fusion. Also plays an essential role in placenta formation by acting as the main receptor for syncytin-A (SynA). Therefore, participates in the normal fusion of syncytiotrophoblast layer I (SynT-I) and in the proper morphogenesis of both fetal and maternal vasculatures within the placenta. May also act as a modulator of nicotinic acetylcholine receptors (nAChRs) activity. In vitro inhibits alpha-3:beta-4-containing nAChRs maximum response. The chain is Lymphocyte antigen 6E from Mus musculus (Mouse).